Here is a 50-residue protein sequence, read N- to C-terminus: Sperm protamine P1 (50 aa).

2 disulfides stabilise this stretch: C7–C15 and C38–C46.

The protein belongs to the protamine P1 family. In terms of assembly, cross-linked by interchain disulfide bonds around the DNA-helix. Testis.

Its subcellular location is the nucleus. The protein resides in the chromosome. In terms of biological role, protamines substitute for histones in the chromatin of sperm during the haploid phase of spermatogenesis. They compact sperm DNA into a highly condensed, stable and inactive complex. In Equus caballus (Horse), this protein is Sperm protamine P1 (PRM1).